The sequence spans 222 residues: Endonuclease V (222 aa).

Positions 43 and 109 each coordinate Mg(2+).

This sequence belongs to the endonuclease V family. The cofactor is Mg(2+).

Its subcellular location is the cytoplasm. The catalysed reaction is Endonucleolytic cleavage at apurinic or apyrimidinic sites to products with a 5'-phosphate.. Its function is as follows. DNA repair enzyme involved in the repair of deaminated bases. Selectively cleaves double-stranded DNA at the second phosphodiester bond 3' to a deoxyinosine leaving behind the intact lesion on the nicked DNA. The sequence is that of Endonuclease V from Roseiflexus castenholzii (strain DSM 13941 / HLO8).